The following is a 286-amino-acid chain: Phosphonates import ATP-binding protein PhnC (286 aa).

Residues 3–246 (FHLKQVTRRF…AVTEIYGTDS (244 aa)) enclose the ABC transporter domain. Position 35-42 (35-42 (GRSGAGKS)) interacts with ATP.

This sequence belongs to the ABC transporter superfamily. Phosphonates importer (TC 3.A.1.9.1) family. In terms of assembly, the complex is composed of two ATP-binding proteins (PhnC), two transmembrane proteins (PhnE) and a solute-binding protein (PhnD).

The protein localises to the cell inner membrane. The enzyme catalyses phosphonate(out) + ATP + H2O = phosphonate(in) + ADP + phosphate + H(+). Functionally, part of the ABC transporter complex PhnCDE involved in phosphonates import. Responsible for energy coupling to the transport system. This is Phosphonates import ATP-binding protein PhnC from Agrobacterium fabrum (strain C58 / ATCC 33970) (Agrobacterium tumefaciens (strain C58)).